Here is a 316-residue protein sequence, read N- to C-terminus: uncharacterized protein (316 aa).

An S4 RNA-binding domain is found at 16 to 89; the sequence is ERLDKFLARA…IPINIIYEDE (74 aa). The active site involves Asp140.

It belongs to the pseudouridine synthase RluA family.

It carries out the reaction a uridine in RNA = a pseudouridine in RNA. This is an uncharacterized protein from Aquifex aeolicus (strain VF5).